Consider the following 256-residue polypeptide: Protein YIPF5 (256 aa).

Over 1–125 (MSNFDNFNTD…ADGSIMNETD (125 aa)) the chain is Cytoplasmic. The chain crosses the membrane as a helical span at residues 126 to 146 (LAGPMVFCLAFGATLLLAGKI). A topological domain (lumenal) is located at residue Gln147. The helical transmembrane segment at 148–168 (FGYVYGISAMGCLGMYCLLNL) threads the bilayer. Residues 169 to 172 (MSMT) lie on the Cytoplasmic side of the membrane. The helical transmembrane segment at 173–193 (GVSFGCVSSVLGYCLLPMIIL) threads the bilayer. The Lumenal portion of the chain corresponds to 194 to 195 (ST). Residues 196–216 (FAVIFSLQGILGIVLAALIIG) form a helical membrane-spanning segment. Over 217–235 (WCSFSASKIFISALAMDGQ) the chain is Cytoplasmic. A helical transmembrane segment spans residues 236–256 (QLLVAYPCALLYGVFALISVF).

This sequence belongs to the YIP1 family.

It localises to the endoplasmic reticulum membrane. The protein resides in the golgi apparatus. Its subcellular location is the cis-Golgi network membrane. Plays a role in transport between endoplasmic reticulum and Golgi. The sequence is that of Protein YIPF5 (yipf5) from Xenopus laevis (African clawed frog).